Here is a 318-residue protein sequence, read N- to C-terminus: HPr kinase/phosphorylase (318 aa).

Residues H143 and K164 contribute to the active site. Residue 158–165 coordinates ATP; the sequence is GKSGVGKS. Mg(2+) is bound at residue S165. The active-site Proton acceptor; for phosphorylation activity. Proton donor; for dephosphorylation activity is the D182. Residues 206-215 are important for the catalytic mechanism of both phosphorylation and dephosphorylation; it reads MEIRGLGILN. Position 207 (E207) interacts with Mg(2+). Residue R248 is part of the active site. The important for the catalytic mechanism of dephosphorylation stretch occupies residues 269 to 274; sequence PVKPGR.

It belongs to the HPrK/P family. In terms of assembly, homohexamer. The cofactor is Mg(2+).

It carries out the reaction [HPr protein]-L-serine + ATP = [HPr protein]-O-phospho-L-serine + ADP + H(+). The catalysed reaction is [HPr protein]-O-phospho-L-serine + phosphate + H(+) = [HPr protein]-L-serine + diphosphate. In terms of biological role, catalyzes the ATP- as well as the pyrophosphate-dependent phosphorylation of a specific serine residue in HPr, a phosphocarrier protein of the phosphoenolpyruvate-dependent sugar phosphotransferase system (PTS). HprK/P also catalyzes the pyrophosphate-producing, inorganic phosphate-dependent dephosphorylation (phosphorolysis) of seryl-phosphorylated HPr (P-Ser-HPr). This is HPr kinase/phosphorylase from Leptospira borgpetersenii serovar Hardjo-bovis (strain L550).